Here is a 395-residue protein sequence, read N- to C-terminus: Dihydroorotate dehydrogenase (quinone), mitochondrial (395 aa).

Residues 1 to 10 (MAWRQLRKRA) constitute a mitochondrion; not cleaved transit peptide. Over 1-10 (MAWRQLRKRA) the chain is Mitochondrial matrix. The chain crosses the membrane as a helical span at residues 11-30 (LDAAIILGGGGLLFTSYLTA). Residues 31–395 (TGDDHFYAEY…TDAIGVDHRR (365 aa)) lie on the Mitochondrial intermembrane side of the membrane. FMN contacts are provided by residues 95–99 (AGFDK) and Ser119. A substrate-binding site is contributed by Lys99. 144–148 (NRYGF) serves as a coordination point for substrate. Residues Asn180 and Asn211 each coordinate FMN. Residue 211–216 (NVSSPN) coordinates substrate. Ser214 acts as the Nucleophile in catalysis. FMN is bound by residues Lys254 and Thr282. A substrate-binding site is contributed by 283–284 (NT). Residues Gly305, Gly334, and 355 to 356 (YT) each bind FMN.

It belongs to the dihydroorotate dehydrogenase family. Type 2 subfamily. Monomer. FMN is required as a cofactor. In terms of processing, the uncleaved transit peptide is required for mitochondrial targeting and proper membrane integration.

Its subcellular location is the mitochondrion inner membrane. The enzyme catalyses (S)-dihydroorotate + a quinone = orotate + a quinol. It participates in pyrimidine metabolism; UMP biosynthesis via de novo pathway; orotate from (S)-dihydroorotate (quinone route): step 1/1. Functionally, catalyzes the conversion of dihydroorotate to orotate with quinone as electron acceptor. Required for UMP biosynthesis via de novo pathway. The protein is Dihydroorotate dehydrogenase (quinone), mitochondrial (Dhodh) of Mus musculus (Mouse).